The primary structure comprises 548 residues: Serine/threonine-protein phosphatase 2A 56 kDa regulatory subunit delta 1 isoform (548 aa).

Over residues 1–10 (MKGIKSKMLS) the composition is skewed to basic residues. Residues 1–75 (MKGIKSKMLS…KKVPIDTTPT (75 aa)) form a disordered region. A compositionally biased stretch (basic and acidic residues) spans 27 to 39 (KKSNSHDSSKAPK). Y96 is subject to Phosphotyrosine. Phosphoserine is present on residues S99, S109, and S542.

Belongs to the phosphatase 2A regulatory subunit B family. PP2A consists of a common heterodimeric core enzyme, composed of a 36 kDa catalytic subunit (subunit C) and a 65 kDa constant regulatory subunit (PR65 or subunit A), that associates with a variety of regulatory subunits. Proteins that associate with the core dimer include three families of regulatory subunits B (the R2/B/PR55/B55, R3/B''/PR72/PR130/PR59 and R5/B'/B56 families), the 48 kDa variable regulatory subunit, viral proteins, and cell signaling molecules.

Its subcellular location is the cytoplasm. It is found in the nucleus. Its function is as follows. The B regulatory subunit might modulate substrate selectivity and catalytic activity, and might also direct the localization of the catalytic enzyme to a particular subcellular compartment. Has a role in cell shape control and septum formation. The sequence is that of Serine/threonine-protein phosphatase 2A 56 kDa regulatory subunit delta 1 isoform (par1) from Schizosaccharomyces pombe (strain 972 / ATCC 24843) (Fission yeast).